We begin with the raw amino-acid sequence, 313 residues long: Olfactory receptor 8B3 (313 aa).

The Extracellular portion of the chain corresponds to 1-25 (MLARNNSLVTEFILAGLTDHPEFQQ). N-linked (GlcNAc...) asparagine glycosylation is present at asparagine 5. The helical transmembrane segment at 26-46 (PLFFLFLVVYIVTMVGNLGLI) threads the bilayer. The Cytoplasmic portion of the chain corresponds to 47-54 (ILFGLNSH). Residues 55–75 (LHTPMYYFLFNLSFIDLCYSS) form a helical membrane-spanning segment. At 76-99 (VFTPKMLMNFVSKKNIISYVGCMT) the chain is on the extracellular side. Cysteine 97 and cysteine 189 are oxidised to a cystine. The chain crosses the membrane as a helical span at residues 100-120 (QLFFFLFFVISECYMLTSMAY). At 121–139 (DRYVAICNPLLYKVTMSHQ) the chain is on the cytoplasmic side. The chain crosses the membrane as a helical span at residues 140–160 (VCSMLTFAAYIMGLAGATAHT). Residues 161–197 (GCMLRLTFCSANIINHYLCDILPLLQLSCTSTYVNEV) lie on the Extracellular side of the membrane. Residues 198-217 (VVLIVVGINIMVPSCTILIS) traverse the membrane as a helical segment. Residues 218 to 237 (YVFIVTSILHIKSTQGRSKA) lie on the Cytoplasmic side of the membrane. Residues 238–258 (FSTCSSHVIALSLFFGSAAFM) form a helical membrane-spanning segment. The Extracellular portion of the chain corresponds to 259 to 270 (YIKYSSGSMEQG). The chain crosses the membrane as a helical span at residues 271–291 (KVSSVFYTNVVPMLNPLIYSL). Topologically, residues 292–313 (RNKDVKVALRKALIKIQRRNIF) are cytoplasmic.

This sequence belongs to the G-protein coupled receptor 1 family.

It localises to the cell membrane. In terms of biological role, odorant receptor. This is Olfactory receptor 8B3 (OR8B3) from Homo sapiens (Human).